Consider the following 187-residue polypeptide: Adenine phosphoribosyltransferase (187 aa).

Belongs to the purine/pyrimidine phosphoribosyltransferase family. Homodimer.

It localises to the cytoplasm. It carries out the reaction AMP + diphosphate = 5-phospho-alpha-D-ribose 1-diphosphate + adenine. It participates in purine metabolism; AMP biosynthesis via salvage pathway; AMP from adenine: step 1/1. In terms of biological role, catalyzes a salvage reaction resulting in the formation of AMP, that is energically less costly than de novo synthesis. This chain is Adenine phosphoribosyltransferase, found in Burkholderia pseudomallei (strain 1106a).